The primary structure comprises 137 residues: Molluscan insulin-related peptide 2 (137 aa).

An N-terminal signal peptide occupies residues 1 to 31 (MVGVRLVFTNAFVVTVLLTLLLDVVVKPAEG). The residue at position 32 (Gln32) is a Pyrrolidone carboxylic acid. Disulfide bonds link Cys47–Cys123, Cys59–Cys136, and Cys122–Cys127. The propeptide at 71 to 83 (DAETGWLLPETMV) is C-beta peptide like. Residues 86–110 (NAETDLDDPLRNIKLSSESALTYLT) constitute a propeptide, C-alpha peptide like. Gln113 is modified (pyrrolidone carboxylic acid).

The protein belongs to the insulin family. In terms of assembly, heterodimer of a B chain and an A chain linked by two disulfide bonds. In terms of tissue distribution, expressed in the cerebral light-green cells which are giant neuroendocrines cells involved in the control of growth.

It localises to the cytoplasmic vesicle. It is found in the secretory vesicle. In Lymnaea stagnalis (Great pond snail), this protein is Molluscan insulin-related peptide 2.